Here is a 102-residue protein sequence, read N- to C-terminus: Small ribosomal subunit protein uS10 (102 aa).

The protein belongs to the universal ribosomal protein uS10 family. Part of the 30S ribosomal subunit.

Involved in the binding of tRNA to the ribosomes. This chain is Small ribosomal subunit protein uS10, found in Salinispora tropica (strain ATCC BAA-916 / DSM 44818 / JCM 13857 / NBRC 105044 / CNB-440).